Reading from the N-terminus, the 541-residue chain is CRISPR-associated exonuclease Cas4/endonuclease Cas1 fusion (541 aa).

Positions 1–179 (MGIHSLLYCE…NCSLAPVCLP (179 aa)) are CRISPR-associated exonuclease Cas4. Cys9 is a [4Fe-4S] cluster binding site. Residues Asp65 and Glu78 each contribute to the Mn(2+) site. Cys168, Cys171, and Cys177 together coordinate [4Fe-4S] cluster. Positions 204–541 (TLHVFGHDSR…ANIFAQARLR (338 aa)) are CRISPR-associated endonuclease Cas1. Mn(2+) is bound by residues Glu365, His433, and Glu448.

The protein in the N-terminal section; belongs to the CRISPR-associated exonuclease Cas4 family. This sequence in the C-terminal section; belongs to the CRISPR-associated endonuclease Cas1 family. In terms of assembly, homodimer, forms a heterotetramer with a Cas2 homodimer. [4Fe-4S] cluster is required as a cofactor. Mg(2+) serves as cofactor. It depends on Mn(2+) as a cofactor.

The enzyme catalyses exonucleolytic cleavage in the 5'- to 3'-direction to yield nucleoside 3'-phosphates.. Its function is as follows. CRISPR (clustered regularly interspaced short palindromic repeat), is an adaptive immune system that provides protection against mobile genetic elements (viruses, transposable elements and conjugative plasmids). CRISPR clusters contain spacers, sequences complementary to antecedent mobile elements, and target invading nucleic acids. CRISPR clusters are transcribed and processed into CRISPR RNA (crRNA). The Cas4 region acts as a ssDNA exonuclease, while the Cas1 region acts as a dsDNA endonuclease. Involved in the integration of spacer DNA into the CRISPR cassette. This Leptospira interrogans serogroup Icterohaemorrhagiae serovar Lai (strain 56601) protein is CRISPR-associated exonuclease Cas4/endonuclease Cas1 fusion (cas4-cas1).